Reading from the N-terminus, the 31-residue chain is Photosystem II reaction center protein T (31 aa).

Residues 3–23 (ALVYTFLLISTLGIIFFGIFF) traverse the membrane as a helical segment.

Belongs to the PsbT family. In terms of assembly, PSII is composed of 1 copy each of membrane proteins PsbA, PsbB, PsbC, PsbD, PsbE, PsbF, PsbH, PsbI, PsbJ, PsbK, PsbL, PsbM, PsbT, PsbY, PsbZ, Psb30/Ycf12, at least 3 peripheral proteins of the oxygen-evolving complex and a large number of cofactors. It forms dimeric complexes.

The protein localises to the plastid. The protein resides in the chloroplast thylakoid membrane. In terms of biological role, found at the monomer-monomer interface of the photosystem II (PS II) dimer, plays a role in assembly and dimerization of PSII. PSII is a light-driven water plastoquinone oxidoreductase, using light energy to abstract electrons from H(2)O, generating a proton gradient subsequently used for ATP formation. The protein is Photosystem II reaction center protein T of Nephroselmis olivacea (Green alga).